Here is a 133-residue protein sequence, read N- to C-terminus: Small ribosomal subunit protein uS8 (133 aa).

It belongs to the universal ribosomal protein uS8 family. Part of the 30S ribosomal subunit. Contacts proteins S5 and S12.

Its function is as follows. One of the primary rRNA binding proteins, it binds directly to 16S rRNA central domain where it helps coordinate assembly of the platform of the 30S subunit. The sequence is that of Small ribosomal subunit protein uS8 from Prochlorococcus marinus (strain MIT 9313).